The sequence spans 26 residues: Oxyopinin-3b (26 aa).

Expressed by the venom gland.

The protein resides in the secreted. Its function is as follows. May have cytolytic and antimicrobial activity. This Oxyopes takobius (Lynx spider) protein is Oxyopinin-3b.